The primary structure comprises 247 residues: tRNA (guanine-N(1)-)-methyltransferase (247 aa).

Residues Gly-116 and 135–140 (IGDYVL) contribute to the S-adenosyl-L-methionine site.

It belongs to the RNA methyltransferase TrmD family. In terms of assembly, homodimer.

It localises to the cytoplasm. The enzyme catalyses guanosine(37) in tRNA + S-adenosyl-L-methionine = N(1)-methylguanosine(37) in tRNA + S-adenosyl-L-homocysteine + H(+). In terms of biological role, specifically methylates guanosine-37 in various tRNAs. The sequence is that of tRNA (guanine-N(1)-)-methyltransferase from Symbiobacterium thermophilum (strain DSM 24528 / JCM 14929 / IAM 14863 / T).